The primary structure comprises 362 residues: Glutaminase-asparaginase (362 aa).

A signal peptide spans 1 to 25 (MKPLLHAFAPGVMALMLLLPQAAQA). The Asparaginase/glutaminase domain occupies 35–362 (SNVVILATGG…KELQRIFWEY (328 aa)). T45 functions as the Acyl-ester intermediate in the catalytic mechanism. Residues S92 and 125 to 126 (TD) each bind substrate.

It belongs to the asparaginase 1 family. In terms of assembly, homotetramer.

It localises to the periplasm. It catalyses the reaction L-glutamine + H2O = L-glutamate + NH4(+). The enzyme catalyses L-asparagine + H2O = L-aspartate + NH4(+). The polypeptide is Glutaminase-asparaginase (ansB) (Pseudomonas aeruginosa (strain ATCC 15692 / DSM 22644 / CIP 104116 / JCM 14847 / LMG 12228 / 1C / PRS 101 / PAO1)).